Here is a 967-residue protein sequence, read N- to C-terminus: Putative helicase MOV-10 (967 aa).

A disordered region spans residues 85–117 (ADQYRRPRTDTEVSAPAPGQQPSSGPPAPQSRA). The segment covering 98–107 (SAPAPGQQPS) has biased composition (low complexity). Residue 516–523 (GPPGTGKT) participates in ATP binding. The DEAG box signature appears at 638–641 (DECG).

The protein belongs to the DNA2/NAM7 helicase family. SDE3 subfamily.

The protein resides in the cytoplasm. Its subcellular location is the P-body. The protein localises to the cytoplasmic ribonucleoprotein granule. It is found in the stress granule. It localises to the nucleus. It catalyses the reaction ATP + H2O = ADP + phosphate + H(+). 5' to 3' RNA helicase that is involved in a number of cellular roles ranging from mRNA metabolism and translation, modulation of viral infectivity, inhibition of retrotransposition, or regulation of synaptic transmission. Plays an important role in innate antiviral immunity by promoting type I interferon production. Required for microRNA (miRNA)-mediated gene silencing by the RNA-induced silencing complex (RISC). Required for both miRNA-mediated translational repression and miRNA-mediated cleavage of complementary mRNAs by RISC. In cooperation with FMR1, regulates miRNA-mediated translational repression by AGO2. Restricts retrotransposition of long interspersed element-1 (LINE-1). Required for embryonic viability and for normal central nervous system development and function. May function as a messenger ribonucleoprotein (mRNP) clearance factor. This Gallus gallus (Chicken) protein is Putative helicase MOV-10 (MOV10).